A 490-amino-acid polypeptide reads, in one-letter code: Katanin p60 ATPase-containing subunit A-like 1 (490 aa).

Position 1 is an N-acetylmethionine (Met1). Residues 95 to 178 (DPAVWPPPVP…MQDGASDGDI (84 aa)) are disordered. Basic and acidic residues predominate over residues 116–127 (PNREVRPLRKDV). Residues 128–139 (AGVGARGPVGRA) show a composition bias toward low complexity. A compositionally biased stretch (basic and acidic residues) spans 143–169 (SKSEKPSTNKDKDYRARGRDDKGRKNM). Ser174 is subject to Phosphoserine. Position 248 to 255 (248 to 255 (GPPGTGKT)) interacts with ATP.

Belongs to the AAA ATPase family. Katanin p60 subunit A1 subfamily. A-like 1 sub-subfamily. In terms of assembly, interacts with KATNB1 and KATNBL1.

The protein resides in the cytoplasm. It is found in the cytoskeleton. Its subcellular location is the spindle pole. The protein localises to the spindle. The catalysed reaction is n ATP + n H2O + a microtubule = n ADP + n phosphate + (n+1) alpha/beta tubulin heterodimers.. Functionally, regulates microtubule dynamics in Sertoli cells, a process that is essential for spermiogenesis and male fertility. Severs microtubules in an ATP-dependent manner, promoting rapid reorganization of cellular microtubule arrays. Has microtubule-severing activity in vitro. The protein is Katanin p60 ATPase-containing subunit A-like 1 of Sorex araneus (Eurasian common shrew).